The sequence spans 558 residues: DNA ligase B (558 aa).

The active-site N6-AMP-lysine intermediate is lysine 124.

Belongs to the NAD-dependent DNA ligase family. LigB subfamily.

The enzyme catalyses NAD(+) + (deoxyribonucleotide)n-3'-hydroxyl + 5'-phospho-(deoxyribonucleotide)m = (deoxyribonucleotide)n+m + AMP + beta-nicotinamide D-nucleotide.. Its function is as follows. Catalyzes the formation of phosphodiester linkages between 5'-phosphoryl and 3'-hydroxyl groups in double-stranded DNA using NAD as a coenzyme and as the energy source for the reaction. The sequence is that of DNA ligase B from Klebsiella pneumoniae (strain 342).